The following is a 161-amino-acid chain: Ribosome maturation factor RimP (161 aa).

The protein belongs to the RimP family.

It is found in the cytoplasm. Its function is as follows. Required for maturation of 30S ribosomal subunits. The chain is Ribosome maturation factor RimP from Rickettsia massiliae (strain Mtu5).